A 365-amino-acid chain; its full sequence is Sulfate/thiosulfate import ATP-binding protein CysA (365 aa).

An ABC transporter domain is found at 3-237 (IEIANIKKSF…PATRFVLEFM (235 aa)). 35–42 (GPSGSGKT) is an ATP binding site.

It belongs to the ABC transporter superfamily. Sulfate/tungstate importer (TC 3.A.1.6) family. The complex is composed of two ATP-binding proteins (CysA), two transmembrane proteins (CysT and CysW) and a solute-binding protein (CysP).

It is found in the cell inner membrane. It catalyses the reaction sulfate(out) + ATP + H2O = sulfate(in) + ADP + phosphate + H(+). It carries out the reaction thiosulfate(out) + ATP + H2O = thiosulfate(in) + ADP + phosphate + H(+). In terms of biological role, part of the ABC transporter complex CysAWTP involved in sulfate/thiosulfate import. Responsible for energy coupling to the transport system. In Escherichia coli O157:H7, this protein is Sulfate/thiosulfate import ATP-binding protein CysA.